A 535-amino-acid polypeptide reads, in one-letter code: Ankyrin repeat domain-containing protein 34C (535 aa).

ANK repeat units follow at residues 10-39 (TDGNSLLKAVWLGRLRLTRLLLEGGAYINE), 43-80 (KGETALMVACITKHVDQQSISKSKMVKYLLDNRADPNI), 84-114 (SGKTALIHACIRRAGGEVVSLLLENGADPSL), and 118-147 (TGASALVYAINADDKDALKHLLDACKAKGK). 2 disordered regions span residues 159 to 181 (SGTKTTKQYLNVPPSPKVEDRHS) and 214 to 237 (AGHPSSCNTSKAVNEPGSPTRKVS). Residues 216–225 (HPSSCNTSKA) are compositionally biased toward polar residues. The residue at position 301 (Ser-301) is a Phosphoserine. The interval 381–444 (DLDIQPGPDP…RRRPPHLLER (64 aa)) is disordered. Ser-447 carries the post-translational modification Phosphoserine.

The protein belongs to the ANKRD34 family.

The chain is Ankyrin repeat domain-containing protein 34C (ANKRD34C) from Homo sapiens (Human).